The following is a 274-amino-acid chain: Thiamine kinase (274 aa).

Belongs to the thiamine kinase family.

It catalyses the reaction thiamine + ATP = thiamine phosphate + ADP + H(+). It functions in the pathway cofactor biosynthesis; thiamine diphosphate biosynthesis; thiamine phosphate from thiamine: step 1/1. In terms of biological role, catalyzes the ATP-dependent phosphorylation of thiamine to thiamine phosphate. Is involved in thiamine salvage. The protein is Thiamine kinase of Salmonella newport (strain SL254).